Consider the following 484-residue polypeptide: MKIPRTMSTQHPDNVHTPFFTENIELTGEDEVKEAYYVYSHLGCTEQMWDCEGKEVDNYVVKKLLSRYGDYFKEHHLGRDLFLTLRVPNPEIERTEAKILLETLGSIPRSYDVAHHFYNDTYAPIFEIILPMTTSFASIDNIYQYYCDFVIGQQYKRLGGRDLTIAEWIGPFHPDKIRVIPLFEDKDGMLAADTILRRYFQDKDLDYQRVFLARSDPAVNYGQIGAVLLNKIALWRLHLLSEDTGIPVYPIIGAGSAPFRGNLRPDTVRRVTDEYAGAYTFTIQSAFKYDTNLEEAVSAIRYLEEREITPAREIDDTYAISLIERYAAGYQKQIRSLAPLINRVAAYIPSRRKRKLHVGLFGYSRNMGGVSLPRAITVTAALYSIGIPPEVLGLSALTENDREFVLENYRYVTEDLSDACRYLNPDSSFLPDEIKKILPDWIEIDPHSEHRVLSGQIEKAVTACQIDSVQDMIIRAGAIRKFLG.

Belongs to the PEPCase type 2 family. As to quaternary structure, homotetramer. Requires Mg(2+) as cofactor.

It catalyses the reaction oxaloacetate + phosphate = phosphoenolpyruvate + hydrogencarbonate. Its function is as follows. Catalyzes the irreversible beta-carboxylation of phosphoenolpyruvate (PEP) to form oxaloacetate (OAA), a four-carbon dicarboxylic acid source for the tricarboxylic acid cycle. The polypeptide is Phosphoenolpyruvate carboxylase (Methanospirillum hungatei JF-1 (strain ATCC 27890 / DSM 864 / NBRC 100397 / JF-1)).